We begin with the raw amino-acid sequence, 210 residues long: dTTP/UTP pyrophosphatase (210 aa).

Asp89 (proton acceptor) is an active-site residue.

The protein belongs to the Maf family. YhdE subfamily. The cofactor is a divalent metal cation.

It localises to the cytoplasm. The catalysed reaction is dTTP + H2O = dTMP + diphosphate + H(+). It carries out the reaction UTP + H2O = UMP + diphosphate + H(+). Nucleoside triphosphate pyrophosphatase that hydrolyzes dTTP and UTP. May have a dual role in cell division arrest and in preventing the incorporation of modified nucleotides into cellular nucleic acids. This is dTTP/UTP pyrophosphatase from Burkholderia lata (strain ATCC 17760 / DSM 23089 / LMG 22485 / NCIMB 9086 / R18194 / 383).